Consider the following 148-residue polypeptide: IEDEYGNVLHASGGYAAPAAYAAPVAYAAPVAKAVVAAPAVAYAAPVAKAVVAEPVAYPKYEFNYGVHDAHTGDIKQQSEARDGDVVKGSYSLVEPDGSTRTVEYQADDHNGFNAVVHRTPGTHPVAVAPVAVAHAPVAVAHAPIAYH.

5 consecutive repeat copies span residues 16 to 19, A22, 28 to 31, 37 to 40, and 44 to 47. The Chitin-binding type R&amp;R domain occupies 58–128; sequence YPKYEFNYGV…RTPGTHPVAV (71 aa).

Component of the cuticle of migratory locust which contains more than 100 different structural proteins. This Locusta migratoria (Migratory locust) protein is Cuticle protein 8.